Reading from the N-terminus, the 56-residue chain is Large ribosomal subunit protein bL33 (56 aa).

Belongs to the bacterial ribosomal protein bL33 family.

This chain is Large ribosomal subunit protein bL33, found in Helicobacter hepaticus (strain ATCC 51449 / 3B1).